We begin with the raw amino-acid sequence, 238 residues long: Transcriptional repressor ThaA (238 aa).

Residues 169–234 enclose the HTH luxR-type domain; sequence IPGEIARVSL…HAAVKATLVG (66 aa). Residues 193 to 212 constitute a DNA-binding region (H-T-H motif); sequence VSEISSILQMSVRNINFHIQ.

This sequence belongs to the autoinducer-regulated transcriptional regulatory protein family.

In terms of biological role, represses thailandamide production. The chain is Transcriptional repressor ThaA from Burkholderia thailandensis (strain ATCC 700388 / DSM 13276 / CCUG 48851 / CIP 106301 / E264).